A 177-amino-acid polypeptide reads, in one-letter code: uncharacterized protein (177 aa).

Transmembrane regions (helical) follow at residues 20-42, 62-84, 94-116, and 136-158; these read NLVSYAVGGILAIAGYVLILLAL, VVLWIIAVLIVIFAVGISFVSLS, AMSSFLVGVILFYILSVIGGYFI, and GLLYFIGTLLLIVIVGIIVIIVA.

It is found in the cell membrane. This is an uncharacterized protein from Methanocaldococcus jannaschii (strain ATCC 43067 / DSM 2661 / JAL-1 / JCM 10045 / NBRC 100440) (Methanococcus jannaschii).